A 167-amino-acid chain; its full sequence is Small ribosomal subunit protein uS5 (167 aa).

The 64-residue stretch at 11–74 (LQEKLIAVNR…EKARRNMINV (64 aa)) folds into the S5 DRBM domain.

Belongs to the universal ribosomal protein uS5 family. As to quaternary structure, part of the 30S ribosomal subunit. Contacts proteins S4 and S8.

Its function is as follows. With S4 and S12 plays an important role in translational accuracy. In terms of biological role, located at the back of the 30S subunit body where it stabilizes the conformation of the head with respect to the body. The sequence is that of Small ribosomal subunit protein uS5 from Klebsiella pneumoniae subsp. pneumoniae (strain ATCC 700721 / MGH 78578).